The sequence spans 300 residues: MPASAAPCAAPYGTPSPAAPEGAHTAAAGRGAPVSLPRLAQLRAAGEKITMLTAYDATFAALADAAGVECILVGDSLGMVCQGLPSTVGVQLDTMAYHSACVARGLHRVQGSAWLVADLPYGSYAESREQALRSACVLMQAGAQMVKLEGGGWTAPTVEFLVQRGVPVCAHLGLTPQSVHALGGYRVQGKTDAGARTLRQQARELQDAGAALLVLEMVPAALARDITDALPHCHTIGIGAGNGTAGQVLVLHDMLGMNLGKMPRFVHNFMQDAGSVHGAIAAYVQAVKQGRFPDDALHAW.

Residues Asp-75 and Asp-118 each coordinate Mg(2+). Residues 75–76 (DS), Asp-118, and Lys-147 contribute to the 3-methyl-2-oxobutanoate site. Position 149 (Glu-149) interacts with Mg(2+). The Proton acceptor role is filled by Glu-216.

This sequence belongs to the PanB family. In terms of assembly, homodecamer; pentamer of dimers. Requires Mg(2+) as cofactor.

The protein resides in the cytoplasm. It catalyses the reaction 3-methyl-2-oxobutanoate + (6R)-5,10-methylene-5,6,7,8-tetrahydrofolate + H2O = 2-dehydropantoate + (6S)-5,6,7,8-tetrahydrofolate. It functions in the pathway cofactor biosynthesis; (R)-pantothenate biosynthesis; (R)-pantoate from 3-methyl-2-oxobutanoate: step 1/2. In terms of biological role, catalyzes the reversible reaction in which hydroxymethyl group from 5,10-methylenetetrahydrofolate is transferred onto alpha-ketoisovalerate to form ketopantoate. This chain is 3-methyl-2-oxobutanoate hydroxymethyltransferase, found in Verminephrobacter eiseniae (strain EF01-2).